A 314-amino-acid polypeptide reads, in one-letter code: Malate dehydrogenase (314 aa).

NAD(+) is bound by residues 12–17 (GSGFTG) and Asp36. Residues Arg87 and Arg93 each coordinate substrate. Residues Asn100 and 123–125 (LTN) each bind NAD(+). A substrate-binding site is contributed by Asn125. Ser149 is modified (phosphoserine). A substrate-binding site is contributed by Arg156. His180 serves as the catalytic Proton acceptor.

It belongs to the LDH/MDH superfamily. MDH type 3 family.

It catalyses the reaction (S)-malate + NAD(+) = oxaloacetate + NADH + H(+). Functionally, catalyzes the reversible oxidation of malate to oxaloacetate. This is Malate dehydrogenase from Shouchella clausii (strain KSM-K16) (Alkalihalobacillus clausii).